The following is an 822-amino-acid chain: MAAAVVVAEGDSDSRPGQELLVAWNTVSTGLVPPAALGLVSSRTSGAVPPKEEELRAAVEVLRGHGLHSVLEEWFVEVLQNDLQANISPEFWNAISQCENSADEPQCLLLLLDAFGLLESRLDPYLRSLELLEKWTRLGLLMGTGAQGLREEVHTMLRGVLFFSTPRTFQEMIQRLYGCFLRVYMQSKRKGEGGTDPELEGELDSRYARRRYYRLLQSPLCAGCSSDKQQCWCRQALEQFHQLSQVLHRLSLLERVSAEAVTTTLHQVTRERMEDRCRGEYERSFLREFHKWIERVVGWLGKVFLQDGPARPASPEAGNTLRRWRCHVQRFFYRIYASLRIEELFSIVRDFPDSRPAIEDLKYCLERTDQRQQLLVSLKAALETRLLHPGVNTCDIITLYISAIKALRVLDPSMVILEVACEPIRRYLRTREDTVRQIVAGLTGDSDGTGDLAVELSKTDPASLETGQDSEDDSGEPEDWVPDPVDADPGKSSSKRRSSDIISLLVSIYGSKDLFINEYRSLLADRLLHQFSFSPEREIRNVELLKLRFGEAPMHFCEVMLKDMADSRRINANIREEDEKRPAEEQPPFGVYAVILSSEFWPPFKDEKLEVPEDIRAALEAYCKKYEQLKAMRTLSWKHTLGLVTMDVELADRTLSVAVTPVQAVILLYFQDQASWTLEELSKAVKMPVALLRRRMSVWLQQGVLREEPPGTFSVIEEERPQDRDNMVLIDSDDESDSGMASQADQKEEELLLFWTYIQAMLTNLESLSLDRIYNMLRMFVVTGPALAEIDLQELQGYLQKKVRDQQLVYSAGVYRLPKNCS.

Phosphoserine occurs at positions 218, 314, 470, 534, and 697. A disordered region spans residues 450-495 (GDLAVELSKTDPASLETGQDSEDDSGEPEDWVPDPVDADPGKSSSK). Acidic residues predominate over residues 468–481 (QDSEDDSGEPEDWV). A cullin homology region spans residues 502 to 700 (ISLLVSIYGS…LLRRRMSVWL (199 aa)). Phosphotyrosine is present on Tyr810.

This sequence belongs to the cullin family. The mammalian APC/C is composed at least of 14 distinct subunits ANAPC1, ANAPC2, CDC27/APC3, ANAPC4, ANAPC5, CDC16/APC6, ANAPC7, CDC23/APC8, ANAPC10, ANAPC11, CDC26/APC12, ANAPC13, ANAPC15 and ANAPC16 that assemble into a complex of at least 19 chains with a combined molecular mass of around 1.2 MDa; APC/C interacts with FZR1 and FBXO5. In the context of the APC/C complex, directly interacts with UBE2C and UBE2S. Interacts (via cullin domain) with ANAPC11 and with UBCH10. Interacts with NEUROD2. Interacts with FBXO43; the interaction is direct.

It functions in the pathway protein modification; protein ubiquitination. Its function is as follows. Together with the RING-H2 protein ANAPC11, constitutes the catalytic component of the anaphase promoting complex/cyclosome (APC/C), a cell cycle-regulated E3 ubiquitin ligase that controls progression through mitosis and the G1 phase of the cell cycle. The APC/C complex acts by mediating ubiquitination and subsequent degradation of target proteins: it mainly mediates the formation of 'Lys-11'-linked polyubiquitin chains and, to a lower extent, the formation of 'Lys-48'- and 'Lys-63'-linked polyubiquitin chains. The APC/C complex catalyzes assembly of branched 'Lys-11'-/'Lys-48'-linked branched ubiquitin chains on target proteins. The CDC20-APC/C complex positively regulates the formation of synaptic vesicle clustering at active zone to the presynaptic membrane in postmitotic neurons. CDC20-APC/C-induced degradation of NEUROD2 drives presynaptic differentiation. This Homo sapiens (Human) protein is Anaphase-promoting complex subunit 2 (ANAPC2).